Here is a 334-residue protein sequence, read N- to C-terminus: NAD-dependent protein deacetylase sirtuin-3 (334 aa).

The Deacetylase sirtuin-type domain occupies 53–315; that stretch reads SSEKKFSLQD…ERLVDLLGWT (263 aa). Lys57 carries the N6-succinyllysine modification. NAD(+)-binding positions include 80 to 100 and 163 to 166; these read GAGI…SGLY and QNID. His183 functions as the Proton acceptor in the catalytic mechanism. Positions 191, 194, 215, and 218 each coordinate Zn(2+). NAD(+)-binding positions include 254–256 and 279–281; these read GTS and NRD.

This sequence belongs to the sirtuin family. Class I subfamily. Upon metabolic stress, forms a complex composed of FOXO3, SIRT3 and mitochondrial RNA polymerase POLRMT; the complex is recruited to mtDNA in a SIRT3-dependent manner. Also forms a complex composed of FOXO3, SIRT3, TFAM and POLRMT. Interacts with NDUFA9, ACSS1, IDH2 and GDH. Interacts with PCCA. Zn(2+) serves as cofactor. In terms of tissue distribution, expressed in cardiomyocytes (at protein level). Expressed in the brain, liver, kidney and testes. Expressed in skeletal muscles (at protein level).

The protein localises to the mitochondrion matrix. It localises to the cytoplasm. It carries out the reaction N(6)-acetyl-L-lysyl-[protein] + NAD(+) + H2O = 2''-O-acetyl-ADP-D-ribose + nicotinamide + L-lysyl-[protein]. The catalysed reaction is N(6)-[(S)-lactoyl]-L-lysyl-[protein] + NAD(+) + H2O = 2''-O-(S)-lactoyl-ADP-D-ribose + nicotinamide + L-lysyl-[protein]. Its function is as follows. NAD-dependent protein deacetylase. Activates or deactivates mitochondrial target proteins by deacetylating key lysine residues. Known targets include ACSS1, IDH, GDH, PDHA1, SOD2, LCAD, SDHA, MRPL12 and the ATP synthase subunit ATP5PO. Contributes to the regulation of the cellular energy metabolism. Important for regulating tissue-specific ATP levels. In response to metabolic stress, deacetylates transcription factor FOXO3 and recruits FOXO3 and mitochondrial RNA polymerase POLRMT to mtDNA to promote mtDNA transcription. Acts as a regulator of ceramide metabolism by mediating deacetylation of ceramide synthases CERS1, CERS2 and CERS6, thereby increasing their activity and promoting mitochondrial ceramide accumulation. Regulates hepatic lipogenesis. Uses NAD(+) substrate imported by SLC25A47, triggering downstream activation of PRKAA1/AMPK-alpha signaling cascade that ultimately downregulates sterol regulatory element-binding protein (SREBP) transcriptional activities and ATP-consuming lipogenesis to restore cellular energy balance. In addition to protein deacetylase activity, also acts as a protein-lysine deacylase by mediating delactylation of proteins, such as CCNE2 and 'Lys-16' of histone H4 (H4K16la). The protein is NAD-dependent protein deacetylase sirtuin-3 of Mus musculus (Mouse).